A 75-amino-acid polypeptide reads, in one-letter code: OcyC3 (75 aa).

An N-terminal signal peptide occupies residues 1 to 22; sequence MQYKTFLVISLAYLLVADEAAA. Positions 51–75 are excised as a propeptide; that stretch reads EINNVFEPYHENLDLELERFLSQLQ.

Expressed by the venom gland.

It is found in the secreted. It localises to the target cell membrane. Amphipathic peptide with probable antimicrobial activity. May act by disrupting the integrity of the bacterial cell membrane. The protein is OcyC3 of Opisthacanthus cayaporum (South American scorpion).